A 658-amino-acid polypeptide reads, in one-letter code: DNA ligase (658 aa).

NAD(+) contacts are provided by residues 31 to 35 (DFEYD), 80 to 81 (SL), and Glu-110. Residue Lys-112 is the N6-AMP-lysine intermediate of the active site. Positions 133, 167, 279, and 303 each coordinate NAD(+). Residues Cys-397, Cys-400, Cys-415, and Cys-420 each coordinate Zn(2+). Residues 584-654 (DTASIYFQKS…KALNIPIINE (71 aa)) form the BRCT domain.

The protein belongs to the NAD-dependent DNA ligase family. LigA subfamily. Mg(2+) is required as a cofactor. Requires Mn(2+) as cofactor.

It catalyses the reaction NAD(+) + (deoxyribonucleotide)n-3'-hydroxyl + 5'-phospho-(deoxyribonucleotide)m = (deoxyribonucleotide)n+m + AMP + beta-nicotinamide D-nucleotide.. In terms of biological role, DNA ligase that catalyzes the formation of phosphodiester linkages between 5'-phosphoryl and 3'-hydroxyl groups in double-stranded DNA using NAD as a coenzyme and as the energy source for the reaction. It is essential for DNA replication and repair of damaged DNA. This chain is DNA ligase, found in Mycoplasma pneumoniae (strain ATCC 29342 / M129 / Subtype 1) (Mycoplasmoides pneumoniae).